A 282-amino-acid polypeptide reads, in one-letter code: Biotin synthase (282 aa).

The region spanning 1–230 is the Radical SAM core domain; sequence MSDNKIYLCA…NQMLMIAGGR (230 aa). [4Fe-4S] cluster contacts are provided by cysteine 19, cysteine 23, and cysteine 26. [2Fe-2S] cluster contacts are provided by cysteine 63, cysteine 98, and cysteine 156.

This sequence belongs to the radical SAM superfamily. Biotin synthase family. Homodimer. The cofactor is [4Fe-4S] cluster. [2Fe-2S] cluster serves as cofactor.

It carries out the reaction (4R,5S)-dethiobiotin + (sulfur carrier)-SH + 2 reduced [2Fe-2S]-[ferredoxin] + 2 S-adenosyl-L-methionine = (sulfur carrier)-H + biotin + 2 5'-deoxyadenosine + 2 L-methionine + 2 oxidized [2Fe-2S]-[ferredoxin]. It participates in cofactor biosynthesis; biotin biosynthesis; biotin from 7,8-diaminononanoate: step 2/2. Functionally, catalyzes the conversion of dethiobiotin (DTB) to biotin by the insertion of a sulfur atom into dethiobiotin via a radical-based mechanism. The polypeptide is Biotin synthase (Aliarcobacter butzleri (strain RM4018) (Arcobacter butzleri)).